Consider the following 159-residue polypeptide: MDKPRKENEEEPQSAPKTDEERPPVEHSPEKQSLEEQSSEEQSSEEEFFPEELLPELLPEMLLSEERPPQEGLSRKDLFEGRPPMEQPPCGVGKHKLEEGSFKERLARSRPQFRGDIHGRNLSNEEMIQAADELEEMKRVRNKLMIMHWKAKRSRPYPI.

The disordered stretch occupies residues 1-99 (MDKPRKENEE…CGVGKHKLEE (99 aa)). Residues 17-34 (KTDEERPPVEHSPEKQSL) show a composition bias toward basic and acidic residues. Acidic residues predominate over residues 37–54 (QSSEEQSSEEEFFPEELL). A compositionally biased stretch (basic and acidic residues) spans 64–80 (SEERPPQEGLSRKDLFE).

It belongs to the TFS-II family. TFA subfamily.

The protein resides in the nucleus. In terms of biological role, may be involved in transcriptional regulation. Modulates various viral and cellular promoters in a promoter context-dependent manner. Does not bind DNA directly. This Ateles geoffroyi (Black-handed spider monkey) protein is Transcription elongation factor A protein-like 1.